Consider the following 368-residue polypeptide: tRNA-specific 2-thiouridylase MnmA (368 aa).

ATP-binding positions include 11–18 (GMSGGVDS) and Met37. Residues 97-99 (NPD) are interaction with target base in tRNA. The active-site Nucleophile is Cys102. Cys102 and Cys199 form a disulfide bridge. Gly127 is an ATP binding site. Residues 149–151 (KDQ) form an interaction with tRNA region. The Cysteine persulfide intermediate role is filled by Cys199. The segment at 311-312 (RY) is interaction with tRNA.

It belongs to the MnmA/TRMU family. As to quaternary structure, interacts with TusE.

Its subcellular location is the cytoplasm. The catalysed reaction is S-sulfanyl-L-cysteinyl-[protein] + uridine(34) in tRNA + AH2 + ATP = 2-thiouridine(34) in tRNA + L-cysteinyl-[protein] + A + AMP + diphosphate + H(+). Catalyzes the 2-thiolation of uridine at the wobble position (U34) of tRNA(Lys), tRNA(Glu) and tRNA(Gln), leading to the formation of s(2)U34, the first step of tRNA-mnm(5)s(2)U34 synthesis. Sulfur is provided by IscS, via a sulfur-relay system. Binds ATP and its substrate tRNAs. This chain is tRNA-specific 2-thiouridylase MnmA, found in Shigella boydii serotype 4 (strain Sb227).